Here is a 925-residue protein sequence, read N- to C-terminus: Protein translocase subunit SecA (925 aa).

Residues Gln87, 105 to 109 (GEGKT), and Asp531 each bind ATP. Positions 867-909 (AAGADMRFQHSQPESVLHKPEAGEGEEAQPFRRETPKVGRNDP) are disordered. The span at 895-906 (QPFRRETPKVGR) shows a compositional bias: basic and acidic residues. Positions 910, 912, 921, and 922 each coordinate Zn(2+).

This sequence belongs to the SecA family. Monomer and homodimer. Part of the essential Sec protein translocation apparatus which comprises SecA, SecYEG and auxiliary proteins SecDF-YajC and YidC. The cofactor is Zn(2+).

Its subcellular location is the cell inner membrane. The protein localises to the cytoplasm. The enzyme catalyses ATP + H2O + cellular proteinSide 1 = ADP + phosphate + cellular proteinSide 2.. Its function is as follows. Part of the Sec protein translocase complex. Interacts with the SecYEG preprotein conducting channel. Has a central role in coupling the hydrolysis of ATP to the transfer of proteins into and across the cell membrane, serving both as a receptor for the preprotein-SecB complex and as an ATP-driven molecular motor driving the stepwise translocation of polypeptide chains across the membrane. This Thioalkalivibrio sulfidiphilus (strain HL-EbGR7) protein is Protein translocase subunit SecA.